A 387-amino-acid chain; its full sequence is Arginine biosynthesis bifunctional protein ArgJ 2 (387 aa).

The substrate site is built by Thr-147, Lys-169, Thr-180, Glu-259, Asn-382, and Thr-387. Thr-180 serves as the catalytic Nucleophile.

This sequence belongs to the ArgJ family. Heterotetramer of two alpha and two beta chains.

The protein resides in the cytoplasm. The catalysed reaction is N(2)-acetyl-L-ornithine + L-glutamate = N-acetyl-L-glutamate + L-ornithine. The enzyme catalyses L-glutamate + acetyl-CoA = N-acetyl-L-glutamate + CoA + H(+). It participates in amino-acid biosynthesis; L-arginine biosynthesis; L-ornithine and N-acetyl-L-glutamate from L-glutamate and N(2)-acetyl-L-ornithine (cyclic): step 1/1. It functions in the pathway amino-acid biosynthesis; L-arginine biosynthesis; N(2)-acetyl-L-ornithine from L-glutamate: step 1/4. In terms of biological role, catalyzes two activities which are involved in the cyclic version of arginine biosynthesis: the synthesis of N-acetylglutamate from glutamate and acetyl-CoA as the acetyl donor, and of ornithine by transacetylation between N(2)-acetylornithine and glutamate. In Nostoc sp. (strain PCC 7120 / SAG 25.82 / UTEX 2576), this protein is Arginine biosynthesis bifunctional protein ArgJ 2.